A 78-amino-acid chain; its full sequence is Probable [Fe-S]-dependent transcriptional repressor (78 aa).

Iron-sulfur cluster-binding residues include cysteine 56, cysteine 61, cysteine 64, and cysteine 70.

This sequence belongs to the FeoC family.

Functionally, may function as a transcriptional regulator that controls feoABC expression. The chain is Probable [Fe-S]-dependent transcriptional repressor from Salmonella agona (strain SL483).